We begin with the raw amino-acid sequence, 222 residues long: Sortase A (222 aa).

The Cytoplasmic portion of the chain corresponds to 1 to 7 (MLKKTIA). Residues 8-28 (IIILIIGLLLIFSPFIKNGIV) form a helical membrane-spanning segment. The Extracellular portion of the chain corresponds to 29–222 (KYMSGHETIE…ELENKYFPSK (194 aa)). Histidine 127 serves as the catalytic Proton donor/acceptor. Cysteine 188 (acyl-thioester intermediate) is an active-site residue.

This sequence belongs to the bacterial sortase family. Class A subfamily.

The protein localises to the cell membrane. Its activity is regulated as follows. Activity is enhanced by Zn(2+) and strongly enhanced by Ca(2+). Inhibited by chalcone, a precursor of several flavonoids, which blocks the SrtA active site. Functionally, transpeptidase that anchors surface proteins to the cell wall. Recognizes and modifies its substrate by proteolytic cleavage of a C-terminal sorting signal. Following cleavage, a covalent intermediate is formed via a thioester bond between the sortase and its substrate, which is then transferred and covalently attached to the cell wall. This sortase recognizes a Leu-Pro-x-Thr-Gly (LPXTG) motif, which is cleaved by the sortase between the threonine and glycine residues. Involved in pathogenesis. May regulate the rate of synthesis and/or the stability of a subset of LPXTG proteins. Not involved in cell wall-anchoring of Hbp2 (SvpA) or Hbp1. The polypeptide is Sortase A (Listeria monocytogenes serovar 1/2a (strain ATCC BAA-679 / EGD-e)).